The chain runs to 985 residues: Probable beta-galactosidase C (985 aa).

Residues Met1–Ala23 form the signal peptide. 5 residues coordinate substrate: Tyr82, Asn127, Ala128, Glu129, and Asn187. Residue Glu188 is the Proton donor of the active site. Position 251 (Tyr251) interacts with substrate. The cysteines at positions 257 and 304 are disulfide-linked. A glycan (N-linked (GlcNAc...) asparagine) is linked at Asn276. Catalysis depends on Glu287, which acts as the Nucleophile. Tyr353 contributes to the substrate binding site. N-linked (GlcNAc...) asparagine glycosylation is found at Asn391, Asn434, Asn517, Asn602, Asn677, Asn715, Asn720, and Asn759.

Belongs to the glycosyl hydrolase 35 family.

It is found in the secreted. The enzyme catalyses Hydrolysis of terminal non-reducing beta-D-galactose residues in beta-D-galactosides.. Cleaves beta-linked terminal galactosyl residues from gangliosides, glycoproteins, and glycosaminoglycans. This Aspergillus clavatus (strain ATCC 1007 / CBS 513.65 / DSM 816 / NCTC 3887 / NRRL 1 / QM 1276 / 107) protein is Probable beta-galactosidase C (lacC).